The sequence spans 1030 residues: Protein phosphatase 1 regulatory subunit 12A (1030 aa).

Residues 35–38 (KVKF) carry the KVKF motif motif. ANK repeat units lie at residues 39 to 68 (DDGA…DINY), 72 to 101 (DGLT…NINQ), 105 to 134 (EGWI…HVGA), 138 to 164 (EGDT…RQGV), 198 to 227 (SGGT…DVNI), and 231 to 260 (DGWT…DMEM). 2 positions are modified to (3S)-3-hydroxyasparagine; by HIF1AN; partial: asparagine 67 and asparagine 100. Asparagine 226 is subject to (3S)-3-hydroxyasparagine; by HIF1AN; partial. 2 disordered regions span residues 290 to 628 (LHSE…SVPT) and 643 to 928 (ASTT…EKDD). The segment covering 291 to 300 (HSEKRDKKSP) has biased composition (basic and acidic residues). Serine 299 bears the Phosphoserine mark. Over residues 302–316 (IESTANMDNNQSQKT) the composition is skewed to polar residues. The segment covering 318-340 (KNKETLIIEPEKNASRIESLEQE) has biased composition (basic and acidic residues). Residues 357–369 (SEEDEEDDSESEA) are compositionally biased toward acidic residues. The segment covering 385–402 (TSSTQAAPVAVTTPTVSS) has biased composition (low complexity). Serine 422 and serine 432 each carry phosphoserine. Residues 422-432 (SPKEEERKDES) show a composition bias toward basic and acidic residues. Threonine 443 is subject to Phosphothreonine. Position 445 is a phosphoserine; by NUAK1 (serine 445). Phosphotyrosine is present on tyrosine 446. A compositionally biased stretch (low complexity) spans 469 to 480 (RSASSPRLSSSL). Phosphoserine; by NUAK1 is present on serine 472. Position 473 is a phosphoserine; by CDK1 (serine 473). Serine 477 carries the phosphoserine modification. Residues 481–491 (DNKEKEKDSKG) show a composition bias toward basic and acidic residues. Serine 507 and serine 509 each carry phosphoserine. Residues 540–551 (NSSVNEGSTYHK) are compositionally biased toward polar residues. Residues 564-610 (SSSVPSTTSTPTVTSAAGLQKSLLSSTSTTTKITTGSSSAGTQSSTS) show a composition bias toward low complexity. Phosphoserine is present on residues serine 601 and serine 618. The segment covering 614–625 (WAEDSTEKEKDS) has biased composition (basic and acidic residues). Low complexity predominate over residues 643 to 660 (ASTTTLTTTTAGTVSSTT). A compositionally biased stretch (basic and acidic residues) spans 673-682 (VRDEESESQR). Positions 682-864 (RKARSRQARQ…VSFWTQDSDE (183 aa)) are interaction with ROCK2. The span at 683-693 (KARSRQARQSR) shows a compositional bias: basic residues. Phosphoserine; by PKA and PKG; in vitro occurs at positions 692 and 695. Threonine 696 carries the phosphothreonine; by ROCK1, ROCK2, CDC42BP, ZIPK/DAPK3 and RAF1 modification. Residues 718–767 (RTREQENEEKEKEEKEKQDKEKQEEKKESETSREDEYKQKYSRTYDETYQ) show a composition bias toward basic and acidic residues. The span at 773 to 795 (STSSSTTPSSSLSTMSSSLYASS) shows a compositional bias: low complexity. A compositionally biased stretch (polar residues) spans 796-810 (QLNRPNSLVGITSAY). At serine 802 the chain carries Phosphoserine. Basic and acidic residues predominate over residues 814-840 (ITKENEREGEKREEEKEGEDKSQPKSI). A compositionally biased stretch (basic residues) spans 841–852 (RERRRPREKRRS). At serine 852 the chain carries Phosphoserine; by ROCK2. A compositionally biased stretch (acidic residues) spans 861 to 875 (DSDENEQEQQSDTEE). A phosphoserine mark is found at serine 862 and serine 871. Over residues 884–897 (TDSISRYETSSTSA) the composition is skewed to polar residues. Phosphoserine occurs at positions 903 and 908. Positions 903–913 (SLLGRSGSYSY) are enriched in low complexity. Phosphoserine; by NUAK1 is present on serine 910. Over residues 914-928 (LEERKPYSSRLEKDD) the composition is skewed to basic and acidic residues. Phosphoserine is present on serine 995.

As to quaternary structure, PP1 comprises a catalytic subunit, PPP1CA, PPP1CB or PPP1CC, and one or several targeting or regulatory subunits. PPP1R12A mediates binding to myosin. Interacts with ARHA and CIT. Binds PPP1R12B, ROCK1 and IL16. Interacts directly with PRKG1. Non-covalent dimer of 2 dimers; PRKG1-PRKG1 and PPP1R12A-PPP1R12A. Interacts with SMTNL1. Interacts with PPP1CB; the interaction is direct. Interacts (when phosphorylated at Ser-445, Ser-472 and Ser-910) with 14-3-3. Interacts with ROCK1 and ROCK2. Interacts with isoform 1 and isoform 2 of ZIPK/DAPK3. Interacts with RAF1. Interacts with HIF1AN. Interacts with NCKAP1L. In terms of processing, phosphorylated by CIT (Rho-associated kinase). Phosphorylated cooperatively by ROCK1 and CDC42BP on Thr-696. Phosphorylated on upon DNA damage, probably by ATM or ATR. In vitro, phosphorylation of Ser-695 by PKA and PKG appears to prevent phosphorylation of the inhibitory site Thr-696, probably mediated by PRKG1. Phosphorylation at Ser-445, Ser-472 and Ser-910 by NUAK1 promotes interaction with 14-3-3, leading to inhibit interaction with myosin light chain MLC2, preventing dephosphorylation of MLC2. May be phosphorylated at Thr-696 by DMPK; may inhibit the myosin phosphatase activity. Phosphorylated at Ser-473 by CDK1 during mitosis, creating docking sites for the POLO box domains of PLK1. Subsequently, PLK1 binds and phosphorylates PPP1R12A. In terms of tissue distribution, expressed in striated muscles, specifically in type 2a fibers (at protein level).

The protein resides in the cytoplasm. Its subcellular location is the cytoskeleton. It is found in the stress fiber. Key regulator of protein phosphatase 1C (PPP1C). Mediates binding to myosin. As part of the PPP1C complex, involved in dephosphorylation of PLK1. Capable of inhibiting HIF1AN-dependent suppression of HIF1A activity. The polypeptide is Protein phosphatase 1 regulatory subunit 12A (Homo sapiens (Human)).